The primary structure comprises 246 residues: Histone H1 (246 aa).

Disordered stretches follow at residues 1–51 (MATD…PTHL) and 105–246 (GGKL…KAKK). Low complexity predominate over residues 9–34 (PAPLVDAAPEAPADAPAAPAADANAA). Residues 35-47 (KAKKATAPKKRAS) show a composition bias toward basic residues. One can recognise an H15 domain in the interval 49 to 119 (THLPYAEMVS…KVKNSYKLSS (71 aa)). Basic residues-rich tracts occupy residues 129 to 189 (AAPK…KAKP) and 198 to 208 (PLAKKAGRAKA). Over residues 224–235 (KKAAPSKKAATP) the composition is skewed to low complexity.

Belongs to the histone H1/H5 family.

Its subcellular location is the nucleus. It is found in the chromosome. In terms of biological role, histones H1 are necessary for the condensation of nucleosome chains into higher-order structures. The polypeptide is Histone H1 (Zea mays (Maize)).